The sequence spans 631 residues: Arginine--tRNA ligase (631 aa).

Positions 132-142 (PNIAKPLHVGH) match the 'HIGH' region motif.

It belongs to the class-I aminoacyl-tRNA synthetase family.

The protein resides in the cytoplasm. The enzyme catalyses tRNA(Arg) + L-arginine + ATP = L-arginyl-tRNA(Arg) + AMP + diphosphate. This Halobacterium salinarum (strain ATCC 700922 / JCM 11081 / NRC-1) (Halobacterium halobium) protein is Arginine--tRNA ligase.